The chain runs to 161 residues: uncharacterized protein (161 aa).

Belongs to the SixA phosphatase family.

This is an uncharacterized protein from Mycobacterium leprae (strain TN).